The primary structure comprises 437 residues: Elongation factor 1-gamma (437 aa).

Residue Ala2 is modified to N-acetylalanine. The GST N-terminal domain occupies 2-87 (AAGTLYTYPE…YVSNEELRGS (86 aa)). In terms of domain architecture, GST C-terminal spans 88–216 (TPEAAAQVVQ…VKLCEKMAQF (129 aa)). N6-acetyllysine is present on residues Lys147 and Lys212. A compositionally biased stretch (basic and acidic residues) spans 221 to 254 (FAESQPKKDTPRKEKGSREEKQKPQTERKEEKKA). A disordered region spans residues 221–268 (FAESQPKKDTPRKEKGSREEKQKPQTERKEEKKAAAPAPEEEMDECEQ). Residue Lys253 forms a Glycyl lysine isopeptide (Lys-Gly) (interchain with G-Cter in SUMO1) linkage. Positions 276 to 437 (AKDPFAHLPK…KAVNQGKIFK (162 aa)) constitute an EF-1-gamma C-terminal domain. Lys285 participates in a covalent cross-link: Glycyl lysine isopeptide (Lys-Gly) (interchain with G-Cter in SUMO2). Residue Lys401 is modified to N6-acetyllysine. Position 434 is an N6-acetyllysine; alternate (Lys434). At Lys434 the chain carries N6-malonyllysine; alternate.

In terms of assembly, EF-1 is composed of four subunits: alpha, beta, delta, and gamma.

In terms of biological role, probably plays a role in anchoring the complex to other cellular components. This chain is Elongation factor 1-gamma (Eef1g), found in Rattus norvegicus (Rat).